A 108-amino-acid chain; its full sequence is uncharacterized protein (108 aa).

Positions 81-108 (TNHHQQQQNHQNQQQQQQQPNGIFENNI) are disordered. Over residues 83 to 99 (HHQQQQNHQNQQQQQQQ) the composition is skewed to low complexity.

This is an uncharacterized protein from Dictyostelium discoideum (Social amoeba).